Here is a 529-residue protein sequence, read N- to C-terminus: Glucose-6-phosphate isomerase (529 aa).

Glutamate 322 (proton donor) is an active-site residue. Catalysis depends on residues histidine 351 and lysine 455.

The protein belongs to the GPI family.

It is found in the cytoplasm. It catalyses the reaction alpha-D-glucose 6-phosphate = beta-D-fructose 6-phosphate. It participates in carbohydrate biosynthesis; gluconeogenesis. The protein operates within carbohydrate degradation; glycolysis; D-glyceraldehyde 3-phosphate and glycerone phosphate from D-glucose: step 2/4. Its function is as follows. Catalyzes the reversible isomerization of glucose-6-phosphate to fructose-6-phosphate. This is Glucose-6-phosphate isomerase from Thermosynechococcus vestitus (strain NIES-2133 / IAM M-273 / BP-1).